A 378-amino-acid chain; its full sequence is Ribosomal RNA large subunit methyltransferase G (378 aa).

It belongs to the methyltransferase superfamily. RlmG family.

It is found in the cytoplasm. It carries out the reaction guanosine(1835) in 23S rRNA + S-adenosyl-L-methionine = N(2)-methylguanosine(1835) in 23S rRNA + S-adenosyl-L-homocysteine + H(+). Functionally, specifically methylates the guanine in position 1835 (m2G1835) of 23S rRNA. In Escherichia coli O157:H7, this protein is Ribosomal RNA large subunit methyltransferase G.